A 409-amino-acid polypeptide reads, in one-letter code: 1-deoxy-D-xylulose 5-phosphate reductoisomerase (409 aa).

T5, G6, S7, I8, G31, N33, and N122 together coordinate NADPH. Residue K123 participates in 1-deoxy-D-xylulose 5-phosphate binding. E124 provides a ligand contact to NADPH. D148 serves as a coordination point for Mn(2+). Residues S149, E150, S186, and H209 each coordinate 1-deoxy-D-xylulose 5-phosphate. A Mn(2+)-binding site is contributed by E150. G215 serves as a coordination point for NADPH. The 1-deoxy-D-xylulose 5-phosphate site is built by S222, N227, K228, and E231. E231 lines the Mn(2+) pocket.

It belongs to the DXR family. The cofactor is Mg(2+). Mn(2+) serves as cofactor.

The enzyme catalyses 2-C-methyl-D-erythritol 4-phosphate + NADP(+) = 1-deoxy-D-xylulose 5-phosphate + NADPH + H(+). The protein operates within isoprenoid biosynthesis; isopentenyl diphosphate biosynthesis via DXP pathway; isopentenyl diphosphate from 1-deoxy-D-xylulose 5-phosphate: step 1/6. Functionally, catalyzes the NADPH-dependent rearrangement and reduction of 1-deoxy-D-xylulose-5-phosphate (DXP) to 2-C-methyl-D-erythritol 4-phosphate (MEP). This is 1-deoxy-D-xylulose 5-phosphate reductoisomerase from Parasynechococcus marenigrum (strain WH8102).